Here is a 581-residue protein sequence, read N- to C-terminus: Laccase-1 (581 aa).

The signal sequence occupies residues 1-25 (MENLGFLIISTFLLLFTTLLPYSSA). 2 consecutive Plastocyanin-like domains span residues 34-150 (NVEW…PRQP) and 161-312 (EIPI…YTGK). Residue N80 is glycosylated (N-linked (GlcNAc...) asparagine). Positions 84, 86, 129, and 131 each coordinate Cu cation. N-linked (GlcNAc...) asparagine glycans are attached at residues N241, N300, N386, and N403. A Plastocyanin-like 3 domain is found at 429 to 565 (DFPEKPPNRF…AMGFIVKDGP (137 aa)). Residues H482, H485, H487, H544, C545, H546, and H550 each coordinate Cu cation.

Belongs to the multicopper oxidase family. The cofactor is Cu cation. As to expression, expressed in roots, stems and flowers.

The protein localises to the secreted. The protein resides in the extracellular space. Its subcellular location is the apoplast. The catalysed reaction is 4 hydroquinone + O2 = 4 benzosemiquinone + 2 H2O. Lignin degradation and detoxification of lignin-derived products. This chain is Laccase-1 (LAC1), found in Arabidopsis thaliana (Mouse-ear cress).